A 475-amino-acid chain; its full sequence is Aspartyl/glutamyl-tRNA(Asn/Gln) amidotransferase subunit B (475 aa).

The protein belongs to the GatB/GatE family. GatB subfamily. In terms of assembly, heterotrimer of A, B and C subunits.

The catalysed reaction is L-glutamyl-tRNA(Gln) + L-glutamine + ATP + H2O = L-glutaminyl-tRNA(Gln) + L-glutamate + ADP + phosphate + H(+). It catalyses the reaction L-aspartyl-tRNA(Asn) + L-glutamine + ATP + H2O = L-asparaginyl-tRNA(Asn) + L-glutamate + ADP + phosphate + 2 H(+). Allows the formation of correctly charged Asn-tRNA(Asn) or Gln-tRNA(Gln) through the transamidation of misacylated Asp-tRNA(Asn) or Glu-tRNA(Gln) in organisms which lack either or both of asparaginyl-tRNA or glutaminyl-tRNA synthetases. The reaction takes place in the presence of glutamine and ATP through an activated phospho-Asp-tRNA(Asn) or phospho-Glu-tRNA(Gln). The sequence is that of Aspartyl/glutamyl-tRNA(Asn/Gln) amidotransferase subunit B from Chlorobaculum tepidum (strain ATCC 49652 / DSM 12025 / NBRC 103806 / TLS) (Chlorobium tepidum).